We begin with the raw amino-acid sequence, 449 residues long: Probable phosphoglucosamine mutase (449 aa).

Residue Ser101 is the Phosphoserine intermediate of the active site. Mg(2+) is bound by residues Ser101, Asp239, Asp241, and Asp243. Phosphoserine is present on Ser101.

Belongs to the phosphohexose mutase family. It depends on Mg(2+) as a cofactor. Post-translationally, activated by phosphorylation.

The enzyme catalyses alpha-D-glucosamine 1-phosphate = D-glucosamine 6-phosphate. Catalyzes the conversion of glucosamine-6-phosphate to glucosamine-1-phosphate. In Methanothermobacter thermautotrophicus (strain ATCC 29096 / DSM 1053 / JCM 10044 / NBRC 100330 / Delta H) (Methanobacterium thermoautotrophicum), this protein is Probable phosphoglucosamine mutase.